The sequence spans 178 residues: Large ribosomal subunit protein uL6 (178 aa).

Belongs to the universal ribosomal protein uL6 family. Part of the 50S ribosomal subunit.

Functionally, this protein binds to the 23S rRNA, and is important in its secondary structure. It is located near the subunit interface in the base of the L7/L12 stalk, and near the tRNA binding site of the peptidyltransferase center. The protein is Large ribosomal subunit protein uL6 of Aliarcobacter butzleri (strain RM4018) (Arcobacter butzleri).